Here is an 800-residue protein sequence, read N- to C-terminus: Ent-copalyl diphosphate synthase 2 (800 aa).

The tract at residues Q52–A80 is disordered. Basic and acidic residues predominate over residues E55–R69. Residue K242 coordinates substrate. Positions 374 and 376 each coordinate Mg(2+). A DXDD motif motif is present at residues D374–D377. Residue K461 coordinates substrate.

Belongs to the terpene synthase family. Mg(2+) serves as cofactor.

It catalyses the reaction (2E,6E,10E)-geranylgeranyl diphosphate = ent-copalyl diphosphate. Functionally, catalyzes the conversion of geranylgeranyl diphosphate to the phytoalexin precursor ent-copalyl diphosphate. The protein is Ent-copalyl diphosphate synthase 2 (CPS2) of Oryza sativa subsp. indica (Rice).